The sequence spans 402 residues: Tryptophan synthase beta chain (402 aa).

Lys91 bears the N6-(pyridoxal phosphate)lysine mark.

This sequence belongs to the TrpB family. Tetramer of two alpha and two beta chains. Pyridoxal 5'-phosphate serves as cofactor.

The enzyme catalyses (1S,2R)-1-C-(indol-3-yl)glycerol 3-phosphate + L-serine = D-glyceraldehyde 3-phosphate + L-tryptophan + H2O. It participates in amino-acid biosynthesis; L-tryptophan biosynthesis; L-tryptophan from chorismate: step 5/5. In terms of biological role, the beta subunit is responsible for the synthesis of L-tryptophan from indole and L-serine. This chain is Tryptophan synthase beta chain, found in Streptococcus thermophilus (strain ATCC BAA-491 / LMD-9).